The sequence spans 413 residues: Arginine deiminase (413 aa).

Cysteine 403 acts as the Amidino-cysteine intermediate in catalysis.

The protein belongs to the arginine deiminase family.

It localises to the cytoplasm. The enzyme catalyses L-arginine + H2O = L-citrulline + NH4(+). It participates in amino-acid degradation; L-arginine degradation via ADI pathway; carbamoyl phosphate from L-arginine: step 1/2. This is Arginine deiminase from Clostridium perfringens (strain SM101 / Type A).